The chain runs to 628 residues: Eukaryotic peptide chain release factor GTP-binding subunit ERF3B (628 aa).

Over residues 1–10 the composition is skewed to low complexity; sequence MDSGSSSSDS. 3 disordered regions span residues 1-49, 72-124, and 146-195; these read MDSG…SAFS, FLRG…LEGS, and LEES…VIVP. In terms of domain architecture, tr-type G spans 201 to 425; that stretch reads KEHVNVVFIG…YLDNLPNFNR (225 aa). Residues 210–217 are G1; sequence GHVDAGKS. 213-218 contributes to the GTP binding site; that stretch reads DAGKST. A G2 region spans residues 266–270; the sequence is GKTVE. The interval 287–290 is G3; it reads DAPG. GTP-binding positions include 349 to 352 and 391 to 393; these read NKMD and SGL. The segment at 349-352 is G4; that stretch reads NKMD. The segment at 391 to 393 is G5; it reads SGL.

It belongs to the TRAFAC class translation factor GTPase superfamily. Classic translation factor GTPase family. ERF3 subfamily. As to quaternary structure, component of the eRF1-eRF3-GTP ternary complex, composed of ETF1/ERF1 and ERF3 (GSPT1/ERF3A or GSPT2/ERF3B) and GTP. Component of the transient SURF (SMG1-UPF1-eRF1-eRF3) complex. Interacts with UPF1 and PABPC1. As to expression, highly expressed in IUCC stage II colorectal cancer (CRC).

The protein resides in the cytoplasm. The catalysed reaction is GTP + H2O = GDP + phosphate + H(+). Its function is as follows. GTPase component of the eRF1-eRF3-GTP ternary complex, a ternary complex that mediates translation termination in response to the termination codons UAA, UAG and UGA. GSPT2/ERF3B mediates ETF1/ERF1 delivery to stop codons: The eRF1-eRF3-GTP complex binds to a stop codon in the ribosomal A-site. GTP hydrolysis by GSPT2/ERF3B induces a conformational change that leads to its dissociation, permitting ETF1/ERF1 to accommodate fully in the A-site. Component of the transient SURF complex which recruits UPF1 to stalled ribosomes in the context of nonsense-mediated decay (NMD) of mRNAs containing premature stop codons. The protein is Eukaryotic peptide chain release factor GTP-binding subunit ERF3B (GSPT2) of Homo sapiens (Human).